Reading from the N-terminus, the 271-residue chain is uncharacterized protein (271 aa).

Belongs to the HAD-like hydrolase superfamily.

This is an uncharacterized protein from Staphylococcus aureus.